Reading from the N-terminus, the 441-residue chain is MSTMTPREIVSELDAYIIGQSEAKRAVAIALRNRWRRMQLPEELRQEVTPKNILMIGPTGVGKTEIARRLAKLANAPFVKVEATKFTEVGYVGKEVDTIIRDLTDMAVKQIRKIEVEKNRMKAQDAAEERILDILLPRAKNKWGETEYEKDSATRQVFRKKLREGALDDSEIEVDISSQMNVEIMTPPGMEEMTSQLQSLFEGLSPSHSKKRRMKVKDAMKVLIDDEAAKLVNNEDLKQKAIESVEQNGIVFIDEIDKICKQSDRGGADVSREGVQRDLLPIIEGSTVNTKHGMVKTDHILFICSGAFQVARPSDLLPELQGRLPIRVELKSLTKEDFERILTEPSASLTLQYKELMKTEGVTVEFTPDGISKIAEAAFHVNEKTENIGARRLHTVLERLMDGISFDASERSGESVVIDEKYVSEVLNDVVDNEDLSRFIL.

ATP contacts are provided by residues isoleucine 18, 60–65, aspartate 254, glutamate 319, and arginine 391; that span reads GVGKTE.

The protein belongs to the ClpX chaperone family. HslU subfamily. As to quaternary structure, a double ring-shaped homohexamer of HslV is capped on each side by a ring-shaped HslU homohexamer. The assembly of the HslU/HslV complex is dependent on binding of ATP.

The protein localises to the cytoplasm. Functionally, ATPase subunit of a proteasome-like degradation complex; this subunit has chaperone activity. The binding of ATP and its subsequent hydrolysis by HslU are essential for unfolding of protein substrates subsequently hydrolyzed by HslV. HslU recognizes the N-terminal part of its protein substrates and unfolds these before they are guided to HslV for hydrolysis. The chain is ATP-dependent protease ATPase subunit HslU from Actinobacillus succinogenes (strain ATCC 55618 / DSM 22257 / CCUG 43843 / 130Z).